Reading from the N-terminus, the 553-residue chain is Arginine--tRNA ligase (553 aa).

Residues proline 132–histidine 140 carry the 'HIGH' region motif.

The protein belongs to the class-I aminoacyl-tRNA synthetase family. Monomer.

It localises to the cytoplasm. It catalyses the reaction tRNA(Arg) + L-arginine + ATP = L-arginyl-tRNA(Arg) + AMP + diphosphate. The sequence is that of Arginine--tRNA ligase from Staphylococcus aureus (strain N315).